We begin with the raw amino-acid sequence, 493 residues long: Uridine 5'-monophosphate synthase (493 aa).

Residues 1-207 (MVAQNSDKMR…VAKYIAAVQI (207 aa)) are OPRTase. Residues 208–233 (NSDGTFVGGDKGDVVRANDLQRTKLT) are domain linker. Positions 234–493 (YENRANLAKS…WAAYQDRVAK (260 aa)) are OMPdecase. Lysine 320 is an active-site residue.

This sequence in the N-terminal section; belongs to the purine/pyrimidine phosphoribosyltransferase family. It in the C-terminal section; belongs to the OMP decarboxylase family.

The catalysed reaction is orotidine 5'-phosphate + diphosphate = orotate + 5-phospho-alpha-D-ribose 1-diphosphate. It catalyses the reaction orotidine 5'-phosphate + H(+) = UMP + CO2. It participates in pyrimidine metabolism; UMP biosynthesis via de novo pathway; UMP from orotate: step 1/2. Its pathway is pyrimidine metabolism; UMP biosynthesis via de novo pathway; UMP from orotate: step 2/2. The sequence is that of Uridine 5'-monophosphate synthase (r-l) from Drosophila melanogaster (Fruit fly).